The sequence spans 278 residues: Secreted RxLR effector protein 151 (278 aa).

The first 18 residues, 1-18 (MRNRAVLFGLFFIGYSSC), serve as a signal peptide directing secretion. Residues 49–64 (RLLQVDGPKRILAEER) carry the RxLR-dEER motif.

This sequence belongs to the RxLR effector family.

The protein localises to the secreted. It localises to the host endoplasmic reticulum membrane. Functionally, secreted effector that completely suppresses the host cell death induced by cell death-inducing proteins. The sequence is that of Secreted RxLR effector protein 151 from Plasmopara viticola (Downy mildew of grapevine).